A 362-amino-acid chain; its full sequence is Phenylalanine--tRNA ligase alpha subunit (362 aa).

Residue glutamate 263 participates in Mg(2+) binding.

Belongs to the class-II aminoacyl-tRNA synthetase family. Phe-tRNA synthetase alpha subunit type 1 subfamily. As to quaternary structure, tetramer of two alpha and two beta subunits. Mg(2+) is required as a cofactor.

It is found in the cytoplasm. The enzyme catalyses tRNA(Phe) + L-phenylalanine + ATP = L-phenylalanyl-tRNA(Phe) + AMP + diphosphate + H(+). The sequence is that of Phenylalanine--tRNA ligase alpha subunit from Caulobacter sp. (strain K31).